We begin with the raw amino-acid sequence, 355 residues long: Erythronate-4-phosphate dehydrogenase (355 aa).

The substrate site is built by serine 45 and threonine 66. Aspartate 146 serves as a coordination point for NAD(+). Arginine 206 is a catalytic residue. Position 229 (aspartate 229) interacts with NAD(+). The active site involves glutamate 234. Histidine 251 functions as the Proton donor in the catalytic mechanism. Glycine 254 is an NAD(+) binding site. Tyrosine 255 serves as a coordination point for substrate.

Belongs to the D-isomer specific 2-hydroxyacid dehydrogenase family. PdxB subfamily. As to quaternary structure, homodimer.

Its subcellular location is the cytoplasm. The enzyme catalyses 4-phospho-D-erythronate + NAD(+) = (R)-3-hydroxy-2-oxo-4-phosphooxybutanoate + NADH + H(+). The protein operates within cofactor biosynthesis; pyridoxine 5'-phosphate biosynthesis; pyridoxine 5'-phosphate from D-erythrose 4-phosphate: step 2/5. In terms of biological role, catalyzes the oxidation of erythronate-4-phosphate to 3-hydroxy-2-oxo-4-phosphonooxybutanoate. In Acinetobacter baumannii (strain ATCC 17978 / DSM 105126 / CIP 53.77 / LMG 1025 / NCDC KC755 / 5377), this protein is Erythronate-4-phosphate dehydrogenase.